Reading from the N-terminus, the 491-residue chain is MDTAPDHREPQEQGESRKWYEMTASEFYVYVVAFMCGVSMMMSVNAVFSAPAYIMTYYRYAMQDPEAVPLYTNFWNNVMTYYNLIGIVTSLIMEPLTLLSWFRRIPIKVRLLGGLVILIVEIIVLMVVPARGTSEAGAVATICCTGFIGGFGKSIFESTAYGMFGAFPSSFTSTMMGGVGMSGVLTSLLQIIVKAALPDSYEGVKKQSKIYYGLDVGIQGMTFVALILLRFNSFAQNYFGDLGAVKSKVDAGKLSAEALCHTDEHPTHDKEGRNSSSGKEVPALGEVQTAAAKSEGPDAVEESSWPHEVEGPTSNEILVATAIFSTLRRVKWMFVACAFNFLITLFLFPGIAVGMFPDSKWFSTIAVFIFNVFDVLGRFSPSLKLMWPRSYKQRWIIVAASFARVIFVPLLLLHSYHYIPGEAYGYVMEVIFGFSNGYVGSMALVLGPQSKGIDNDGKRFVAGTLMGISILVGGTIGTVLSIMTQTIRERH.

6 consecutive transmembrane segments (helical) span residues 27–47 (FYVY…VNAV), 82–102 (YNLI…LSWF), 109–129 (VRLL…MVVP), 136–156 (AGAV…KSIF), 173–193 (STMM…QIIV), and 209–229 (KIYY…LILL). Residues 261-273 (HTDEHPTHDKEGR) are compositionally biased toward basic and acidic residues. 2 disordered regions span residues 261–280 (HTDE…SGKE) and 290–309 (AAAK…PHEV). Asn-274 is a glycosylation site (N-linked (GlcNAc...) asparagine). The next 5 helical transmembrane spans lie at 333–353 (MFVA…GIAV), 361–381 (WFST…RFSP), 395–415 (WIIV…LLHS), 427–447 (VMEV…LVLG), and 460–480 (FVAG…GTVL).

Belongs to the SLC29A/ENT transporter (TC 2.A.57) family.

Its subcellular location is the membrane. The enzyme catalyses adenosine(in) + H(+)(in) = adenosine(out) + H(+)(out). The catalysed reaction is uridine(in) + H(+)(in) = uridine(out) + H(+)(out). Its function is as follows. Sodium-independent nucleoside:H(+) symporter; transports adenosine with high affinity and uridine with moderate affinity. Can transport cytidine and thymidine. In Leishmania donovani, this protein is Nucleoside transporter 1.2.